Here is a 164-residue protein sequence, read N- to C-terminus: UPF0303 protein R02983 (164 aa).

Belongs to the UPF0303 family.

This chain is UPF0303 protein R02983, found in Rhizobium meliloti (strain 1021) (Ensifer meliloti).